A 2061-amino-acid polypeptide reads, in one-letter code: Putative PWWP domain-containing DNA repair factor 4 (2061 aa).

Disordered stretches follow at residues 101-211 (TNLG…SRAR), 382-408 (ALGR…RSSV), 541-586 (TPGT…GDGS), 668-694 (PATL…GDGS), 864-910 (PTPG…SERS), 1046-1072 (PGTM…GDRS), 1159-1182 (ALHG…RGDS), 1205-1383 (KAIA…RDDK), 1521-1548 (PGAL…DSSP), and 1602-1726 (KKGK…KLAN). Composition is skewed to basic and acidic residues over residues 133–153 (PRED…KREN) and 162–173 (ESKRALRDDRSQ). Positions 397-408 (TPGTLQGNRSSV) are enriched in polar residues. The segment covering 1051 to 1061 (GDSSTARTATA) has biased composition (polar residues). The span at 1364–1373 (DSSQVHTTIA) shows a compositional bias: polar residues. Residues 1639 to 1648 (LKEETQDSRP) show a composition bias toward basic and acidic residues. The span at 1656-1665 (PESSPFSGNI) shows a compositional bias: polar residues. Residues 1756 to 1817 (RGTMVWFKFQ…KHLDCKEKEK (62 aa)) form the PWWP domain.

It belongs to the PWWP3A family.

This chain is Putative PWWP domain-containing DNA repair factor 4, found in Homo sapiens (Human).